Consider the following 156-residue polypeptide: Small ribosomal subunit protein uS7c (156 aa).

Belongs to the universal ribosomal protein uS7 family. Part of the 30S ribosomal subunit.

It is found in the plastid. It localises to the chloroplast. In terms of biological role, one of the primary rRNA binding proteins, it binds directly to 16S rRNA where it nucleates assembly of the head domain of the 30S subunit. In Thalassiosira pseudonana (Marine diatom), this protein is Small ribosomal subunit protein uS7c (rps7).